We begin with the raw amino-acid sequence, 135 residues long: MARTKQTARKSTGGKAPRKQLATKAARKTPATGGVKKPHRYRPGTVALREIRKYQKSTELVIRKLPFQRLVREIAQDFKTDLRFQSQAVLALQEAAEAYLVGLFEDTNLCAIHAKRVTIMPKDIQLARRIRGERA.

The disordered stretch occupies residues 1 to 40 (MARTKQTARKSTGGKAPRKQLATKAARKTPATGGVKKPHR). Position 5 is an N6-methyllysine (Lys5). At Lys10 the chain carries N6-acetyllysine; alternate. Lys10 carries the post-translational modification N6-methyllysine; alternate. Ser11 is modified (phosphoserine). Position 12 is a phosphothreonine (Thr12). N6-acetyllysine occurs at positions 15, 19, and 24. An N6-acetyllysine; alternate modification is found at Lys28. Lys28 is subject to N6-methyllysine; alternate. Residues Lys36 and Lys37 each carry the N6-methyllysine modification.

The protein belongs to the histone H3 family. As to quaternary structure, the nucleosome is a histone octamer containing two molecules each of H2A, H2B, H3 and H4 assembled in one H3-H4 heterotetramer and two H2A-H2B heterodimers. The octamer wraps approximately 147 bp of DNA. Acetylation is generally linked to gene activation. Acetylated to form H3K9ac (11%), H3K14ac (17%), H3K18ac (11%), H3K23ac (16%) and H3K27ac (7%). H3K4, H3K35 and H3K36 are not acetylated. H3K4me prevents acetylation. 32% of the histone H3 are acetylated with, on average, 2.4 acetyl-Lys. They are all continuously deacatylated and re-acetylated with a half-life of approximately 2 minutes. Post-translationally, monomethylated to form H3K4me1 (81%), H3K9me1 (16%), H3K27me1 (25%), H3K35me1 (25%) and H3K36me1 (5%). No methylation at H3K14, H3K18 and H3K23. Methylated by a protein complex that includes Mut11. Set1 methylates specifically H3K4. H3K4me1 is associated with silenced euchromatin. Set3 forms H3K9me1, while H3K9me2 is undetected. H3K9me1 is specifically associated with silent, multi-copy transgenes. In terms of processing, no phosphorylation detected.

The protein localises to the nucleus. The protein resides in the chromosome. In terms of biological role, core component of nucleosome. Nucleosomes wrap and compact DNA into chromatin, limiting DNA accessibility to the cellular machineries which require DNA as a template. Histones thereby play a central role in transcription regulation, DNA repair, DNA replication and chromosomal stability. DNA accessibility is regulated via a complex set of post-translational modifications of histones, also called histone code, and nucleosome remodeling. The protein is Histone H3 type 1 (ch3-I) of Chlamydomonas reinhardtii (Chlamydomonas smithii).